The chain runs to 242 residues: 1-(5-phosphoribosyl)-5-[(5-phosphoribosylamino)methylideneamino] imidazole-4-carboxamide isomerase (242 aa).

Asp8 functions as the Proton acceptor in the catalytic mechanism. Asp130 serves as the catalytic Proton donor.

This sequence belongs to the HisA/HisF family.

The protein localises to the cytoplasm. It catalyses the reaction 1-(5-phospho-beta-D-ribosyl)-5-[(5-phospho-beta-D-ribosylamino)methylideneamino]imidazole-4-carboxamide = 5-[(5-phospho-1-deoxy-D-ribulos-1-ylimino)methylamino]-1-(5-phospho-beta-D-ribosyl)imidazole-4-carboxamide. It participates in amino-acid biosynthesis; L-histidine biosynthesis; L-histidine from 5-phospho-alpha-D-ribose 1-diphosphate: step 4/9. This Thioalkalivibrio sulfidiphilus (strain HL-EbGR7) protein is 1-(5-phosphoribosyl)-5-[(5-phosphoribosylamino)methylideneamino] imidazole-4-carboxamide isomerase.